The chain runs to 375 residues: Platelet-derived growth factor receptor-like protein (375 aa).

The signal sequence occupies residues 1–21 (MKFWLLLGLLLLHEALEDVAG). The tract at residues 20–63 (AGQHSPKNKRPKEQGENRIKPTNKKAKPKIPKVKDRDSTDSTAK) is disordered. The segment covering 40-50 (PTNKKAKPKIP) has biased composition (basic residues). Residues 47–159 (PKIPKVKDRD…GYICRRDEAK (113 aa)) form the Ig-like C2-type 1 domain. A disulfide bridge links Cys96 with Cys143. N-linked (GlcNAc...) asparagine glycosylation is present at Asn219. An Ig-like C2-type 2 domain is found at 272 to 375 (PSTTILASSN…TTVATTVEFS (104 aa)). Cys293 and Cys357 are disulfide-bonded.

Forms a complex composed of PDGFRL, TNK2 and GRB2.

The protein localises to the secreted. The sequence is that of Platelet-derived growth factor receptor-like protein (Pdgfrl) from Mus musculus (Mouse).